The following is a 778-amino-acid chain: Jhy protein homolog (778 aa).

4 disordered regions span residues 62–271 (DRIR…PKTD), 334–408 (QYES…LDTS), 631–654 (EKGKKHKKRSSSKNTKLKGYQKRD), and 721–746 (IPKPKPSNLTHQASKEQKNPTYAGKE). Positions 118–139 (PIEDKYSDLRYDPNWKSKKEEG) are enriched in basic and acidic residues. Positions 223 to 234 (SSLSPYVKSSSS) are enriched in low complexity. Positions 334 to 344 (QYESTKSSNVP) are enriched in polar residues. Basic residues predominate over residues 358-371 (SRRPAKLKIRKQCK). A compositionally biased stretch (polar residues) spans 375 to 389 (GLKSSTTEEVTASQG). Residues 390-402 (NQNNPPRQQQNQN) are compositionally biased toward low complexity. A compositionally biased stretch (basic residues) spans 633-650 (GKKHKKRSSSKNTKLKGY). Basic and acidic residues predominate over residues 733–746 (ASKEQKNPTYAGKE).

Functionally, required for the normal development of cilia in brain ependymal cells lining the ventricular surfaces. The polypeptide is Jhy protein homolog (Homo sapiens (Human)).